The chain runs to 528 residues: uncharacterized protein (528 aa).

This is an uncharacterized protein from Giardia intestinalis (Giardia lamblia).